A 185-amino-acid chain; its full sequence is Ribosome-recycling factor (185 aa).

This sequence belongs to the RRF family.

It is found in the cytoplasm. In terms of biological role, responsible for the release of ribosomes from messenger RNA at the termination of protein biosynthesis. May increase the efficiency of translation by recycling ribosomes from one round of translation to another. The polypeptide is Ribosome-recycling factor (Helicobacter hepaticus (strain ATCC 51449 / 3B1)).